The sequence spans 450 residues: NAD-specific glutamate dehydrogenase (450 aa).

Positions 90, 111, and 114 each coordinate substrate. Lys-126 (proton donor) is an active-site residue. Gly-165 lines the substrate pocket. NAD(+)-binding residues include Thr-210 and Asn-241. Ser-381 lines the substrate pocket.

This sequence belongs to the Glu/Leu/Phe/Val dehydrogenases family. Homohexamer.

It catalyses the reaction L-glutamate + NAD(+) + H2O = 2-oxoglutarate + NH4(+) + NADH + H(+). It functions in the pathway amino-acid degradation; L-glutamate degradation via hydroxyglutarate pathway; crotonoyl-CoA from L-glutamate: step 1/5. In Clostridium symbiosum (Bacteroides symbiosus), this protein is NAD-specific glutamate dehydrogenase (gdh).